Reading from the N-terminus, the 79-residue chain is Small proline-rich protein 4 (79 aa).

Residues 1–26 (MSSQQQQRQQQQCPPQRAQQQQVKQP) are compositionally biased toward low complexity. The tract at residues 1–79 (MSSQQQQRQQ…AQQASKSKQK (79 aa)) is disordered. Positions 66–79 (KCPSAQQASKSKQK) are enriched in polar residues.

Belongs to the cornifin (SPRR) family. In terms of processing, cross-linked to membrane proteins by transglutaminase.

The protein resides in the cytoplasm. It is found in the cell cortex. In terms of biological role, cross-linked envelope protein of keratinocytes. Involved in UV-induced cornification. This chain is Small proline-rich protein 4 (SPRR4), found in Homo sapiens (Human).